The following is a 148-amino-acid chain: Large ribosomal subunit protein bL9 (148 aa).

Belongs to the bacterial ribosomal protein bL9 family.

Functionally, binds to the 23S rRNA. The sequence is that of Large ribosomal subunit protein bL9 from Pseudomonas fluorescens (strain Pf0-1).